Reading from the N-terminus, the 451-residue chain is uncharacterized protein (451 aa).

The N-terminal stretch at 1–22 (MKLKLIFSLFLVLVFCSLFVFG) is a signal peptide. 5 N-linked (GlcNAc...) asparagine glycosylation sites follow: Asn-25, Asn-45, Asn-209, Asn-326, and Asn-402.

The protein localises to the secreted. This is an uncharacterized protein from Dictyostelium discoideum (Social amoeba).